The following is a 316-amino-acid chain: Acetylglutamate kinase (316 aa).

Substrate contacts are provided by residues Gly65–Gly66, Arg87, and Asn179.

It belongs to the acetylglutamate kinase family. ArgB subfamily.

It is found in the cytoplasm. The catalysed reaction is N-acetyl-L-glutamate + ATP = N-acetyl-L-glutamyl 5-phosphate + ADP. It participates in amino-acid biosynthesis; L-arginine biosynthesis; N(2)-acetyl-L-ornithine from L-glutamate: step 2/4. Functionally, catalyzes the ATP-dependent phosphorylation of N-acetyl-L-glutamate. The chain is Acetylglutamate kinase from Alkaliphilus metalliredigens (strain QYMF).